A 345-amino-acid chain; its full sequence is UDP-3-O-acylglucosamine N-acyltransferase (345 aa).

His248 serves as the catalytic Proton acceptor.

This sequence belongs to the transferase hexapeptide repeat family. LpxD subfamily. As to quaternary structure, homotrimer.

It carries out the reaction a UDP-3-O-[(3R)-3-hydroxyacyl]-alpha-D-glucosamine + a (3R)-hydroxyacyl-[ACP] = a UDP-2-N,3-O-bis[(3R)-3-hydroxyacyl]-alpha-D-glucosamine + holo-[ACP] + H(+). It functions in the pathway bacterial outer membrane biogenesis; LPS lipid A biosynthesis. In terms of biological role, catalyzes the N-acylation of UDP-3-O-acylglucosamine using 3-hydroxyacyl-ACP as the acyl donor. Is involved in the biosynthesis of lipid A, a phosphorylated glycolipid that anchors the lipopolysaccharide to the outer membrane of the cell. This chain is UDP-3-O-acylglucosamine N-acyltransferase, found in Prochlorococcus marinus (strain SARG / CCMP1375 / SS120).